A 388-amino-acid polypeptide reads, in one-letter code: Alpha-2B adrenergic receptor (388 aa).

The helical transmembrane segment at 1 to 25 (AIAAVITFLILFTIFGNALVILAVL) threads the bilayer. The Cytoplasmic segment spans residues 26 to 36 (TSRSLRAPQNL). Residues 37 to 62 (FLVSLAAADILVATLIIPFSLANELL) form a helical membrane-spanning segment. The Extracellular portion of the chain corresponds to 63 to 72 (GYWYFRRTWC). The cysteines at positions 72 and 151 are disulfide-linked. The helical transmembrane segment at 73–95 (EVYLALDVLFCTSSIVHLCAISL) threads the bilayer. Residues 96–117 (DRYWAVSRALEYNSKRTPRXIK) lie on the Cytoplasmic side of the membrane. The chain crosses the membrane as a helical span at residues 118–140 (CIILTVWLIAAAISLPPLIYKGD). Residues 141-156 (QGPQPRGRPQCKLNQE) lie on the Extracellular side of the membrane. The chain crosses the membrane as a helical span at residues 157 to 180 (AWYILSSSIGSFFAPCLIMILVYL). Residues 181–352 (RIYVIAKRSN…LTREKRFTFV (172 aa)) lie on the Cytoplasmic side of the membrane. The tract at residues 193–309 (GPRAKGASRE…ASACNPPLQQ (117 aa)) is disordered. Positions 239-249 (PTGEKEGKTPE) are enriched in basic and acidic residues. A compositionally biased stretch (acidic residues) spans 279–291 (PEEEAEEEEEECE). The span at 292–302 (PQAAPASSASA) shows a compositional bias: low complexity. A helical membrane pass occupies residues 353 to 376 (LAVVIGVFVLCWFPFFFSYSLGAI). Residues 377–385 (CPQRCKVPH) lie on the Extracellular side of the membrane. Residues 386 to 388 (GLF) form a helical membrane-spanning segment.

This sequence belongs to the G-protein coupled receptor 1 family. Adrenergic receptor subfamily. ADRA2B sub-subfamily. As to quaternary structure, interacts with RAB26. Interacts with PPP1R9B.

It is found in the cell membrane. In terms of biological role, alpha-2 adrenergic receptors mediate the catecholamine-induced inhibition of adenylate cyclase through the action of G proteins. This Orycteropus afer (Aardvark) protein is Alpha-2B adrenergic receptor (ADRA2B).